A 596-amino-acid polypeptide reads, in one-letter code: Two-component response regulator ARR12 (596 aa).

One can recognise a Response regulatory domain in the interval 18–133; the sequence is RVLAVDDDQT…ELKNIWQHVV (116 aa). Asp-69 carries the post-translational modification 4-aspartylphosphate. A compositionally biased stretch (basic and acidic residues) spans 138 to 153; it reads DKNRGSNNNGDKRDGS. The interval 138-192 is disordered; that stretch reads DKNRGSNNNGDKRDGSGNEGVGNSDQNNGKGNRKRKDQYNEDEDEDRDDNDDSCA. Positions 158–167 are enriched in polar residues; the sequence is VGNSDQNNGK. Acidic residues predominate over residues 177-189; that stretch reads NEDEDEDRDDNDD. Residues 194–197 carry the Nuclear localization signal motif; the sequence is KKQR. Positions 197–247 form a DNA-binding region, myb-like GARP; that stretch reads RVVWTVELHKKFVAAVNQLGYEKAMPKKILDLMNVEKLTRENVASHLQKFR. Residues 437–467 form a disordered region; sequence NAVSSSTHPPPPAHNSNSINHQFDVSPLPHS. The span at 450-459 shows a compositional bias: polar residues; that stretch reads HNSNSINHQF.

It belongs to the ARR family. Type-B subfamily. Binds the target DNA as a monomer. In terms of processing, two-component system major event consists of a His-to-Asp phosphorelay between a sensor histidine kinase (HK) and a response regulator (RR). In plants, the His-to-Asp phosphorelay involves an additional intermediate named Histidine-containing phosphotransfer protein (HPt). This multistep phosphorelay consists of a His-Asp-His-Asp sequential transfer of a phosphate group between first a His and an Asp of the HK protein, followed by the transfer to a conserved His of the HPt protein and finally the transfer to an Asp in the receiver domain of the RR protein. As to expression, detected in the whole plant. Predominantly expressed in leaves. Expressed at the root transition zone.

It localises to the nucleus. In terms of biological role, transcriptional activator that binds specifically to the DNA sequence 5'-[AG]GATT-3'. Functions as a response regulator involved in His-to-Asp phosphorelay signal transduction system. Phosphorylation of the Asp residue in the receiver domain activates the ability of the protein to promote the transcription of target genes. Could directly activate some type-A response regulators in response to cytokinins. Involved in the root-meristem size determination through the regulation of cell differentiation. Involved in activating SHY2 during meristem growth and controls PIN expression via activation of SHY2. In Arabidopsis thaliana (Mouse-ear cress), this protein is Two-component response regulator ARR12 (ARR12).